Reading from the N-terminus, the 593-residue chain is Uroporphyrinogen-III C-methyltransferase (593 aa).

A disordered region spans residues E278–N303.

This sequence belongs to the precorrin methyltransferase family.

The catalysed reaction is uroporphyrinogen III + 2 S-adenosyl-L-methionine = precorrin-2 + 2 S-adenosyl-L-homocysteine + H(+). In terms of biological role, siroheme synthase involved in methionine biosynthesis. This chain is Uroporphyrinogen-III C-methyltransferase, found in Saccharomyces cerevisiae (strain ATCC 204508 / S288c) (Baker's yeast).